The chain runs to 138 residues: Acidic phospholipase A2 CH-E6' (138 aa).

Residues 1 to 16 form the signal peptide; sequence MRTLWIVAVLLLGVEG. 7 disulfide bridges follow: Cys42-Cys131, Cys44-Cys60, Cys59-Cys111, Cys65-Cys138, Cys66-Cys104, Cys73-Cys97, and Cys91-Cys102. Ca(2+)-binding residues include Tyr43, Gly45, and Gly47. The active site involves His63. Residue Asp64 coordinates Ca(2+). Residue Asp105 is part of the active site.

Belongs to the phospholipase A2 family. Group II subfamily. D49 sub-subfamily. It depends on Ca(2+) as a cofactor. Expressed by the venom gland.

The protein localises to the secreted. It catalyses the reaction a 1,2-diacyl-sn-glycero-3-phosphocholine + H2O = a 1-acyl-sn-glycero-3-phosphocholine + a fatty acid + H(+). Snake venom phospholipase A2 (PLA2) that shows high lipolytic and weak ADP-induced platelet aggregation activities. Also shows weak anticoagulant activity. PLA2 catalyzes the calcium-dependent hydrolysis of the 2-acyl groups in 3-sn-phosphoglycerides. This Crotalus horridus (Timber rattlesnake) protein is Acidic phospholipase A2 CH-E6'.